Consider the following 296-residue polypeptide: MNKEQLEKMKNGKGFIAALDQSGGSTPKALKEYGVNEDQYSNEDEMFQLVHDMRTRVVTSPSFSPDKILGAILFEQTMDREVEGKYTADYLADKGVVPFLKVDKGLAEEQNGVQLMKPIDNLDSLLDRANERHIFGTKMRSNILELNEQGIKDVVEQQFEVAKQIIAKGLVPIIEPEVNINAKDKAEIEKVLKAELKKGLDSLNADQLVMLKLTIPTEPNLYKELAEHPNVVRVVVLSGGYSREKANELLKDNDELIASFSRALASDLRADQSKEEFDKALGDAVESIYDASVNKN.

The Proton acceptor role is filled by E175. Catalysis depends on K212, which acts as the Schiff-base intermediate with dihydroxyacetone-P.

The protein belongs to the class I fructose-bisphosphate aldolase family.

The enzyme catalyses beta-D-fructose 1,6-bisphosphate = D-glyceraldehyde 3-phosphate + dihydroxyacetone phosphate. The protein operates within carbohydrate degradation; glycolysis; D-glyceraldehyde 3-phosphate and glycerone phosphate from D-glucose: step 4/4. The polypeptide is Fructose-bisphosphate aldolase class 1 (Staphylococcus aureus (strain Mu3 / ATCC 700698)).